We begin with the raw amino-acid sequence, 538 residues long: Poly [ADP-ribose] polymerase 2 (538 aa).

A WGR domain is found at 1-94 (MSIINDENGR…RDDEPVPNKY (94 aa)). The tract at residues 104–133 (RQTEKEVKKEEPEPEPKVDEKNTRGRKKRG) is disordered. Positions 105-126 (QTEKEVKKEEPEPEPKVDEKNT) are enriched in basic and acidic residues. A PARP alpha-helical domain is found at 148 to 285 (VEEVNEKLKE…GSIEASLELK (138 aa)). The PARP catalytic domain occupies 309–535 (EPVSEEIAGK…VKVDRLTAKE (227 aa)). Residues 357–381 (QEVPKKRGRKSTKTAAPTVPPPTTK) are disordered.

The protein belongs to the ARTD/PARP family.

Its subcellular location is the nucleus. The catalysed reaction is NAD(+) + (ADP-D-ribosyl)n-acceptor = nicotinamide + (ADP-D-ribosyl)n+1-acceptor + H(+).. It catalyses the reaction L-aspartyl-[protein] + NAD(+) = 4-O-(ADP-D-ribosyl)-L-aspartyl-[protein] + nicotinamide. It carries out the reaction L-glutamyl-[protein] + NAD(+) = 5-O-(ADP-D-ribosyl)-L-glutamyl-[protein] + nicotinamide. With respect to regulation, inhibited by N-(6-oxo-5,6-dihydrophenanthridin-2-yl)-N,N-dimethylacetamide HCl (PJ34), 1,5-dihydroxyisoquinoline (DHQ) and 3-aminobenzamide (3AB). Its function is as follows. Poly[ADP-ribose] polymerase modifies various nuclear proteins by poly(ADP-ribosyl)ation, a post-translational modification synthesized after DNA damage that appears as an obligatory step in a detection/signaling pathway leading to the reparation of DNA strand breaks and programmed cell death. This chain is Poly [ADP-ribose] polymerase 2, found in Caenorhabditis elegans.